The chain runs to 209 residues: ATP-dependent Clp protease proteolytic subunit (209 aa).

Serine 106 acts as the Nucleophile in catalysis. The active site involves histidine 131.

This sequence belongs to the peptidase S14 family. In terms of assembly, fourteen ClpP subunits assemble into 2 heptameric rings which stack back to back to give a disk-like structure with a central cavity, resembling the structure of eukaryotic proteasomes.

The protein resides in the cytoplasm. The catalysed reaction is Hydrolysis of proteins to small peptides in the presence of ATP and magnesium. alpha-casein is the usual test substrate. In the absence of ATP, only oligopeptides shorter than five residues are hydrolyzed (such as succinyl-Leu-Tyr-|-NHMec, and Leu-Tyr-Leu-|-Tyr-Trp, in which cleavage of the -Tyr-|-Leu- and -Tyr-|-Trp bonds also occurs).. Functionally, cleaves peptides in various proteins in a process that requires ATP hydrolysis. Has a chymotrypsin-like activity. Plays a major role in the degradation of misfolded proteins. The protein is ATP-dependent Clp protease proteolytic subunit of Brucella melitensis biotype 2 (strain ATCC 23457).